Consider the following 255-residue polypeptide: Wtf element wtf15 (255 aa).

Residues 19 to 78 (KAGHEIDLEGSPPSEHNSEEKSTLPSNSDILTSANPVSQASETPDHSIESNTGSTQSPTS) form a disordered region. Composition is skewed to polar residues over residues 41 to 60 (TLPS…QASE) and 67 to 78 (ESNTGSTQSPTS). The next 4 helical transmembrane spans lie at 85-105 (FSFC…CVLP), 112-132 (FLIA…SGSI), 162-182 (FLKT…LVLL), and 187-208 (WGWK…SFCL).

It belongs to the WTF family.

It localises to the spore membrane. Its function is as follows. May act in meiotic drive. The chain is Wtf element wtf15 from Schizosaccharomyces pombe (strain 972 / ATCC 24843) (Fission yeast).